The following is a 1042-amino-acid chain: Elongation factor 3 (1042 aa).

6 HEAT repeats span residues 9 to 46 (KVLM…DPDT), 86 to 124 (PYLV…TMNP), 167 to 204 (YRLP…LISN), 206 to 242 (DIDK…EVHA), 243 to 280 (STLS…LVED), and 289 to 327 (PKLI…VKEG). 2 ABC transporter domains span residues 425–642 (EEGE…YQDI) and 668–994 (CRMR…EQEE). ADP is bound by residues N704, E923, N926, and H952. A disordered region spans residues 1009–1042 (KKAKKLTSSELRKKKKERMARRKKGEEVFSDEDD). Positions 1020-1031 (RKKKKERMARRK) are enriched in basic residues.

It belongs to the ABC transporter superfamily. ABCF family. EF3 subfamily. As to quaternary structure, monomer.

It is found in the cytoplasm. The enzyme catalyses ATP + H2O = ADP + phosphate + H(+). The protein operates within protein biosynthesis; polypeptide chain elongation. Functionally, ribosome-dependent ATPase that functions in cytoplasmic translation elongation. Required for the ATP-dependent release of deacylated tRNA from the ribosomal E-site during protein biosynthesis. Stimulates the eEF1A-dependent binding of aminoacyl-tRNA to the ribosomal A-site, which has reduced affinity for tRNA as long as the E-site is occupied. Assists translation termination by stimulating the release of nascent protein from the ribosome by release factors. The protein is Elongation factor 3 (TEF3) of Pneumocystis carinii.